The primary structure comprises 546 residues: Chaperonin GroEL (546 aa).

ATP is bound by residues 30–33 (TLGP), lysine 51, 87–91 (DGTTT), glycine 415, 479–481 (NAA), and aspartate 495. A disordered region spans residues 527 to 546 (EEKPDVSASSGGMGGMGGMM). Gly residues predominate over residues 537 to 546 (GGMGGMGGMM).

This sequence belongs to the chaperonin (HSP60) family. As to quaternary structure, forms a cylinder of 14 subunits composed of two heptameric rings stacked back-to-back. Interacts with the co-chaperonin GroES.

It is found in the cytoplasm. The catalysed reaction is ATP + H2O + a folded polypeptide = ADP + phosphate + an unfolded polypeptide.. Its function is as follows. Together with its co-chaperonin GroES, plays an essential role in assisting protein folding. The GroEL-GroES system forms a nano-cage that allows encapsulation of the non-native substrate proteins and provides a physical environment optimized to promote and accelerate protein folding. The polypeptide is Chaperonin GroEL (Baumannia cicadellinicola subsp. Homalodisca coagulata).